The primary structure comprises 144 residues: uncharacterized protein (144 aa).

This is an uncharacterized protein from Bacillus subtilis (strain 168).